The primary structure comprises 639 residues: 3-oxocholoyl-CoA 4-desaturase (639 aa).

Gln-101 is a binding site for FMN. 155–158 (HAAH) provides a ligand contact to substrate. Tyr-160 serves as the catalytic Proton donor. FMN-binding positions include Arg-208, Arg-286, and 308-309 (GR). [4Fe-4S] cluster contacts are provided by Cys-332 and Cys-335. Gln-337 is an FAD binding site. [4Fe-4S] cluster contacts are provided by Cys-339 and Cys-353. Residues Ala-383, Glu-402, Gln-410, Lys-420, and Val-447 each coordinate FAD.

It in the N-terminal section; belongs to the NADH:flavin oxidoreductase/NADH oxidase family. Requires FMN as cofactor. The cofactor is FAD. It depends on [4Fe-4S] cluster as a cofactor.

The catalysed reaction is 7alpha,12alpha-dihydroxy-3-oxochol-24-oyl-CoA + NAD(+) = 7alpha,12alpha-dihydroxy-3-oxochol-4-en-24-oyl-CoA + NADH + H(+). It carries out the reaction 7alpha-hydroxy-3-oxochol-24-oyl-CoA + NAD(+) = 7alpha-hydroxy-3-oxochol-4-en-24-oyl-CoA + NADH + H(+). The protein operates within lipid metabolism; bile acid degradation. Its function is as follows. Stereo-specific NAD(H)-dependent 3-oxo-delta4-cholenoic acid oxidoreductase involved in bile acid 7alpha-dehydroxylation. This Clostridium scindens (strain JCM 10418 / VPI 12708) protein is 3-oxocholoyl-CoA 4-desaturase.